A 566-amino-acid polypeptide reads, in one-letter code: Lactase-like protein (566 aa).

An N-terminal signal peptide occupies residues 1–20 (MKPVWVIILGWILLVPRVGT). Over 21 to 540 (AWRGPPEEAS…LLRHMHVASE (520 aa)) the chain is Extracellular. N-linked (GlcNAc...) asparagine glycosylation is found at N170 and N244. The helical transmembrane segment at 541-561 (IVVPTVCALSILTAALMLTLL) threads the bilayer. Residues 562 to 566 (LRRRG) are Cytoplasmic-facing.

The protein belongs to the glycosyl hydrolase 1 family. Klotho subfamily. As to quaternary structure, may form dimers. Strongly expressed in the lens of the eye, where it localizes to the equatorial epithelium and outer layers of newly extending fiber cells (at protein level). May also be expressed in kidney and skin. However, another study suggests that expression is specific to eye and is minimal in other tissues.

Its subcellular location is the endoplasmic reticulum membrane. In terms of biological role, plays a role in formation of the lens suture in the eye, which is important for normal optical properties of the lens. This chain is Lactase-like protein (Lctl), found in Mus musculus (Mouse).